A 107-amino-acid polypeptide reads, in one-letter code: Metallothionein-1 (107 aa).

It belongs to the metallothionein superfamily. Type 7 family.

Functionally, the metallothioneins are involved in the cellular sequestration of toxic metal ions. Binds 12 cadmium ions per molecule. The chain is Metallothionein-1 from Tetrahymena thermophila.